The following is an 80-amino-acid chain: Small ribosomal subunit protein bS16 (80 aa).

It belongs to the bacterial ribosomal protein bS16 family.

This chain is Small ribosomal subunit protein bS16, found in Acholeplasma laidlawii (strain PG-8A).